The sequence spans 466 residues: 3-isopropylmalate dehydratase large subunit (466 aa).

[4Fe-4S] cluster is bound by residues Cys347, Cys407, and Cys410.

This sequence belongs to the aconitase/IPM isomerase family. LeuC type 1 subfamily. As to quaternary structure, heterodimer of LeuC and LeuD. The cofactor is [4Fe-4S] cluster.

The enzyme catalyses (2R,3S)-3-isopropylmalate = (2S)-2-isopropylmalate. It functions in the pathway amino-acid biosynthesis; L-leucine biosynthesis; L-leucine from 3-methyl-2-oxobutanoate: step 2/4. In terms of biological role, catalyzes the isomerization between 2-isopropylmalate and 3-isopropylmalate, via the formation of 2-isopropylmaleate. The sequence is that of 3-isopropylmalate dehydratase large subunit from Shewanella halifaxensis (strain HAW-EB4).